The chain runs to 573 residues: MLFSDFCKILDKIEKTTKRLEKTDYFVELIDFIKTSEKPENLKQVSQITIGRVFAEFENKEIGIGPNLLLEAVKTTGIPEKDLKSKIKETGDIGTAVENLSSNIKQVSLFSQALTLEEVYSTLKKLSEIEGNSSQKKKTRIISNLLILADPVESRYISRLILEDMRIGMNIPTILASFSNYFNVNKESVEKIYAVTNDIGLLGEKLISGSDIENDPELKLKVFRPIKPMLAQLTPSIEDAMIETKMPQFETKYDGARVQVHKSNGDVKIYSRRLENITNSVPELVEEIKKLDIDNIILEGECVAMDLDSGKPRPFQDILRRFRRKYNIDKMAEKIALRIYFFDVLYYNRGLIDTPLKTRREILEKLFGTNNWDSELEKIKKEIFSSKMLFSSFKLNSGDPNLVKEFFNWSLSIGHEGIMIKNPDAPYTPGSRVKTMYKVKPTLENLDVVVTRAKIGMGKRKDWYGSYELSVKDNDGNLHVIGNVGSGLTEDDLEKLTKIVNEIKIEDLGEEVILEPKIVLEVTYEEIQTSEKYEMGYALRFPRVVQIREDKSINDINTLDDVKKIYEIERNRK.

Glu-250 provides a ligand contact to ATP. Lys-252 (N6-AMP-lysine intermediate) is an active-site residue. Positions 257, 272, 301, 342, 432, and 438 each coordinate ATP.

Belongs to the ATP-dependent DNA ligase family. The cofactor is Mg(2+).

It carries out the reaction ATP + (deoxyribonucleotide)n-3'-hydroxyl + 5'-phospho-(deoxyribonucleotide)m = (deoxyribonucleotide)n+m + AMP + diphosphate.. Its function is as follows. DNA ligase that seals nicks in double-stranded DNA during DNA replication, DNA recombination and DNA repair. In Methanococcus maripaludis (strain DSM 14266 / JCM 13030 / NBRC 101832 / S2 / LL), this protein is DNA ligase.